The chain runs to 303 residues: D-alanine--D-alanine ligase (303 aa).

The ATP-grasp domain occupies 103-293 (KTLFIKGGIP…FAQLCEKILE (191 aa)). Residue 130 to 179 (PYVIKPSRQGSSIGIEFVYDIKELDQAIKKSTQYDHVVLAEALITGKELT) coordinates ATP. Aspartate 247, glutamate 260, and asparagine 262 together coordinate Mg(2+).

It belongs to the D-alanine--D-alanine ligase family. Requires Mg(2+) as cofactor. It depends on Mn(2+) as a cofactor.

The protein resides in the cytoplasm. It catalyses the reaction 2 D-alanine + ATP = D-alanyl-D-alanine + ADP + phosphate + H(+). It participates in cell wall biogenesis; peptidoglycan biosynthesis. In terms of biological role, cell wall formation. This is D-alanine--D-alanine ligase from Methylacidiphilum infernorum (isolate V4) (Methylokorus infernorum (strain V4)).